The primary structure comprises 474 residues: Gamma-aminobutyric acid receptor subunit beta-1 (474 aa).

The N-terminal stretch at methionine 1–alanine 25 is a signal peptide. Residues histidine 26–tyrosine 245 are Extracellular-facing. N-linked (GlcNAc...) asparagine glycans are attached at residues asparagine 33 and asparagine 105. Residue tyrosine 122 participates in histamine binding. The cysteines at positions 161 and 175 are disulfide-linked. Asparagine 174 carries N-linked (GlcNAc...) asparagine glycosylation. Histamine contacts are provided by residues serine 181 to tyrosine 182 and threonine 227. The 4-aminobutanoate site is built by tyrosine 182 and threonine 227. 3 helical membrane passes run phenylalanine 246–isoleucine 267, alanine 271–leucine 293, and alanine 305–valine 327. The Cytoplasmic segment spans residues asparagine 328–lysine 451. The helical transmembrane segment at tryptophan 452 to valine 473 threads the bilayer.

The protein belongs to the ligand-gated ion channel (TC 1.A.9) family. Gamma-aminobutyric acid receptor (TC 1.A.9.5) subfamily. GABRB1 sub-subfamily. As to quaternary structure, heteropentamer, formed by a combination of alpha (GABRA1-6), beta (GABRB1-3), gamma (GABRG1-3), delta (GABRD), epsilon (GABRE), rho (GABRR1-3), pi (GABRP) and theta (GABRQ) chains, each subunit exhibiting distinct physiological and pharmacological properties. Binds UBQLN1.

It localises to the postsynaptic cell membrane. The protein localises to the cell membrane. The catalysed reaction is chloride(in) = chloride(out). With respect to regulation, potentiated by histamine. Beta subunit of the heteropentameric ligand-gated chloride channel gated by gamma-aminobutyric acid (GABA), a major inhibitory neurotransmitter in the brain. GABA-gated chloride channels, also named GABA(A) receptors (GABAAR), consist of five subunits arranged around a central pore and contain GABA active binding site(s) located at the alpha and beta subunit interface(s). When activated by GABA, GABAARs selectively allow the flow of chloride anions across the cell membrane down their electrochemical gradient. Chloride influx into the postsynaptic neuron following GABAAR opening decreases the neuron ability to generate a new action potential, thereby reducing nerve transmission. Beta-containing GABAARs can simultaneously bind GABA and histamine where histamine binds at the interface of two neighboring beta subunits, which may be involved in the regulation of sleep and wakefulness. The polypeptide is Gamma-aminobutyric acid receptor subunit beta-1 (Rattus norvegicus (Rat)).